The following is a 418-amino-acid chain: Histidine--tRNA ligase (418 aa).

This sequence belongs to the class-II aminoacyl-tRNA synthetase family. Homodimer.

The protein resides in the cytoplasm. It carries out the reaction tRNA(His) + L-histidine + ATP = L-histidyl-tRNA(His) + AMP + diphosphate + H(+). The polypeptide is Histidine--tRNA ligase (Thermosipho africanus (strain TCF52B)).